We begin with the raw amino-acid sequence, 361 residues long: Rhomboid domain-containing protein 2 (361 aa).

Helical transmembrane passes span S19–L39, L63–I83, C100–V120, F158–I178, and S182–Y202. Disordered regions lie at residues P265–H287 and P318–P361. Polar residues-rich tracts occupy residues Y267–S276 and P318–Q328.

This sequence belongs to the peptidase S54 family. Might form homotrimers; these trimers are only formed in retina. As to expression, widely expressed, including in retina and brain (at protein level), as well as in kidney, testis and ovary. Expressed in all layers of the retina, including inner segments of photoreceptor cells and ganglion cells (at protein level).

The protein localises to the golgi apparatus. It is found in the cis-Golgi network membrane. This Mus musculus (Mouse) protein is Rhomboid domain-containing protein 2 (Rhbdd2).